Consider the following 1305-residue polypeptide: Contactin-associated protein like 5-4 (1305 aa).

The N-terminal stretch at 1–24 (MNSVRRLNSILTLVLSGLWHLGLT) is a signal peptide. At 25–1237 (ATNYNCDEPL…LTDTVQSDSA (1213 aa)) the chain is on the extracellular side. In terms of domain architecture, F5/8 type C spans 30 to 174 (CDEPLASFLS…IGMRVEVYGC (145 aa)). Cys-30 and Cys-174 are disulfide-bonded. 2 consecutive Laminin G-like domains span residues 180-360 (IVGF…TFSC) and 367-544 (PITF…IDLC). N-linked (GlcNAc...) asparagine glycosylation occurs at Asn-282. A disulfide bridge connects residues Cys-329 and Cys-360. An N-linked (GlcNAc...) asparagine glycan is attached at Asn-496. 3 disulfides stabilise this stretch: Cys-512–Cys-544, Cys-550–Cys-561, and Cys-555–Cys-570. The EGF-like 1 domain occupies 546–583 (IKDRCLPNYCEHGGHCAQNWTTFYCNCSDTGYTGATCH). Residue Asn-571 is glycosylated (N-linked (GlcNAc...) asparagine). Cys-572 and Cys-582 are oxidised to a cystine. One can recognise a Fibrinogen C-terminal domain in the interval 584–790 (DSVYEQSCEV…LRCYGDRHFW (207 aa)). An N-linked (GlcNAc...) asparagine glycan is attached at Asn-622. The Laminin G-like 3 domain maps to 791 to 956 (NAVSFTTEAS…KLMSGVTPGC (166 aa)). Disulfide bonds link Cys-929–Cys-956, Cys-960–Cys-973, Cys-967–Cys-982, and Cys-984–Cys-994. The EGF-like 2 domain maps to 957-995 (LGHCSSYGSNCLNGGKCVEKQSGYSCDCTNSPNEGPFCQ). Residues 1014–1198 (EPYLVIKNTS…VQGTLTESGC (185 aa)) enclose the Laminin G-like 4 domain. Asn-1057 is a glycosylation site (N-linked (GlcNAc...) asparagine). A disulfide bridge connects residues Cys-1163 and Cys-1198. A helical membrane pass occupies residues 1238–1258 (VIGGIIALVTFVTFCVIGIMI). The Cytoplasmic segment spans residues 1259–1305 (HFLYLHKQSHCTNQTKEKEYSENLSNSFRNAIDLQNTASECKREYFI).

The protein belongs to the neurexin family.

Its subcellular location is the membrane. Functionally, may play a role in the correct development and proper functioning of the peripheral and central nervous system and be involved in cell adhesion and intercellular communication. This Rattus norvegicus (Rat) protein is Contactin-associated protein like 5-4 (Cntnap5d).